Reading from the N-terminus, the 349-residue chain is 1-acylglycerol-3-phosphate O-acyltransferase ABHD5 (349 aa).

At alanine 2 the chain carries N-acetylalanine. The 108-residue stretch at 77–184 (PLVLLHGFGG…LVEPWGFPER (108 aa)) folds into the AB hydrolase-1 domain. Serine 122 is subject to Phosphoserine. The HXXXXD motif signature appears at 327-332 (HYVYAD).

This sequence belongs to the peptidase S33 family. ABHD4/ABHD5 subfamily. In terms of assembly, interacts with ADRP, PLIN and PNPLA2. Interacts with PLIN5; promotes interaction with PNPLA2.

It localises to the cytoplasm. It is found in the lipid droplet. The catalysed reaction is a 1-acyl-sn-glycero-3-phosphate + an acyl-CoA = a 1,2-diacyl-sn-glycero-3-phosphate + CoA. The enzyme catalyses 1-(9Z-octadecenoyl)-sn-glycero-3-phosphate + (9Z)-octadecenoyl-CoA = 1,2-di-(9Z-octadecenoyl)-sn-glycero-3-phosphate + CoA. It carries out the reaction 1-(9Z-octadecenoyl)-sn-glycero-3-phosphate + hexadecanoyl-CoA = 1-(9Z)-octadecenoyl-2-hexadecanoyl-sn-glycero-3-phosphate + CoA. It catalyses the reaction 1-(9Z-octadecenoyl)-sn-glycero-3-phosphate + octadecanoyl-CoA = 1-(9Z-octadecenoyl)-2-octadecanoyl-sn-glycero-3-phosphate + CoA. The catalysed reaction is 1-(9Z-octadecenoyl)-sn-glycero-3-phosphate + (5Z,8Z,11Z,14Z)-eicosatetraenoyl-CoA = 1-(9Z)-octadecenoyl-2-(5Z,8Z,11Z,14Z)-eicosatetraenoyl-sn-glycero-3-phosphate + CoA. The enzyme catalyses eicosanoyl-CoA + 1-(9Z-octadecenoyl)-sn-glycero-3-phosphate = 1-(9Z)-octadecenoyl-2-eicosanoyl-sn-glycero-3-phosphate + CoA. It carries out the reaction 1-hexadecanoyl-sn-glycero-3-phosphate + (9Z)-octadecenoyl-CoA = 1-hexadecanoyl-2-(9Z-octadecenoyl)-sn-glycero-3-phosphate + CoA. It catalyses the reaction 1-octadecanoyl-sn-glycero-3-phosphate + (9Z)-octadecenoyl-CoA = 1-octadecanoyl-2-(9Z-octadecenoyl)-sn-glycero-3-phosphate + CoA. The catalysed reaction is 1-(5Z,8Z,11Z,14Z-eicosatetraenoyl)-sn-glycero-3-phosphate + (9Z)-octadecenoyl-CoA = 1-(5Z,8Z,11Z,14Z)-eicosatetraenoyl-2-(9Z)-octadecenoyl-sn-glycero-3-phosphate + CoA. With respect to regulation, acyltransferase activity is inhibited by detergents such as Triton X-100 and 3-[(3-cholamidopropyl)dimethylammonio]-1-propanesulfonate (CHAPS). Acyltransferase activity is inhibited by the presence of magnesium and calcium. In terms of biological role, coenzyme A-dependent lysophosphatidic acid acyltransferase that catalyzes the transfer of an acyl group on a lysophosphatidic acid. Functions preferentially with 1-oleoyl-lysophosphatidic acid followed by 1-palmitoyl-lysophosphatidic acid, 1-stearoyl-lysophosphatidic acid and 1-arachidonoyl-lysophosphatidic acid as lipid acceptor. Functions preferentially with arachidonoyl-CoA followed by oleoyl-CoA as acyl group donors. Functions in phosphatidic acid biosynthesis. May regulate the cellular storage of triacylglycerol through activation of the phospholipase PNPLA2. Involved in keratinocyte differentiation. Regulates lipid droplet fusion. The chain is 1-acylglycerol-3-phosphate O-acyltransferase ABHD5 from Pongo abelii (Sumatran orangutan).